The primary structure comprises 306 residues: Porphobilinogen deaminase (306 aa).

The residue at position 239 (Cys239) is an S-(dipyrrolylmethanemethyl)cysteine.

The protein belongs to the HMBS family. As to quaternary structure, monomer. Dipyrromethane is required as a cofactor.

The enzyme catalyses 4 porphobilinogen + H2O = hydroxymethylbilane + 4 NH4(+). It participates in porphyrin-containing compound metabolism; protoporphyrin-IX biosynthesis; coproporphyrinogen-III from 5-aminolevulinate: step 2/4. Its function is as follows. Tetrapolymerization of the monopyrrole PBG into the hydroxymethylbilane pre-uroporphyrinogen in several discrete steps. The protein is Porphobilinogen deaminase of Helicobacter pylori (strain P12).